A 186-amino-acid chain; its full sequence is Ribosome-recycling factor (186 aa).

The protein belongs to the RRF family.

It is found in the cytoplasm. Functionally, responsible for the release of ribosomes from messenger RNA at the termination of protein biosynthesis. May increase the efficiency of translation by recycling ribosomes from one round of translation to another. This is Ribosome-recycling factor from Bordetella avium (strain 197N).